A 239-amino-acid chain; its full sequence is Leucine rich adaptor protein 1 (239 aa).

2 LRR repeats span residues 55–83 (LGDK…LVTL) and 93–114 (LLEE…QYSL). Over residues 105 to 116 (SSLTSSQYSLTG) the composition is skewed to low complexity. Residues 105–138 (SSLTSSQYSLTGGSPGRSRRGSWDSLPDTSSTDR) are disordered. A phosphoserine mark is found at Ser118, Ser126, and Ser129.

Forms a tripartite complex with CDC42BPA/CDC42BPB and MYO18A acting as an adapter connecting both. Its binding to CDC42BPA/CDC42BPB results in their activation by abolition of their negative autoregulation. Interacts with CDC42BPA and CDC42BPB. In terms of processing, phosphorylated.

Its subcellular location is the cytoplasm. In terms of biological role, acts as an activator of the canonical NF-kappa-B pathway and drive the production of pro-inflammatory cytokines. Promotes the antigen (Ag)-presenting and priming function of dendritic cells via the canonical NF-kappa-B pathway. In concert with MYO18A and CDC42BPA/CDC42BPB, is involved in modulating lamellar actomyosin retrograde flow that is crucial to cell protrusion and migration. Activates CDC42BPA/CDC42BPB and targets it to actomyosin through its interaction with MYO18A, leading to MYL9/MLC2 phosphorylation and MYH9/MYH10-dependent actomyosin assembly in the lamella. The protein is Leucine rich adaptor protein 1 (Lurap1) of Mus musculus (Mouse).